The primary structure comprises 601 residues: Elongation factor 4 (601 aa).

The region spanning 7-189 is the tr-type G domain; that stretch reads SNVRNFSIVA…AIVTRLPPPK (183 aa). Residues 19–24 and 136–139 contribute to the GTP site; these read DHGKST and NKVD.

Belongs to the TRAFAC class translation factor GTPase superfamily. Classic translation factor GTPase family. LepA subfamily.

The protein localises to the cell inner membrane. It catalyses the reaction GTP + H2O = GDP + phosphate + H(+). Required for accurate and efficient protein synthesis under certain stress conditions. May act as a fidelity factor of the translation reaction, by catalyzing a one-codon backward translocation of tRNAs on improperly translocated ribosomes. Back-translocation proceeds from a post-translocation (POST) complex to a pre-translocation (PRE) complex, thus giving elongation factor G a second chance to translocate the tRNAs correctly. Binds to ribosomes in a GTP-dependent manner. This is Elongation factor 4 from Afipia carboxidovorans (strain ATCC 49405 / DSM 1227 / KCTC 32145 / OM5) (Oligotropha carboxidovorans).